Here is a 357-residue protein sequence, read N- to C-terminus: S-adenosylmethionine:tRNA ribosyltransferase-isomerase (357 aa).

This sequence belongs to the QueA family. As to quaternary structure, monomer.

The protein localises to the cytoplasm. It catalyses the reaction 7-aminomethyl-7-carbaguanosine(34) in tRNA + S-adenosyl-L-methionine = epoxyqueuosine(34) in tRNA + adenine + L-methionine + 2 H(+). It participates in tRNA modification; tRNA-queuosine biosynthesis. Its function is as follows. Transfers and isomerizes the ribose moiety from AdoMet to the 7-aminomethyl group of 7-deazaguanine (preQ1-tRNA) to give epoxyqueuosine (oQ-tRNA). This Proteus mirabilis (strain HI4320) protein is S-adenosylmethionine:tRNA ribosyltransferase-isomerase.